We begin with the raw amino-acid sequence, 458 residues long: Argininosuccinate lyase (458 aa).

Belongs to the lyase 1 family. Argininosuccinate lyase subfamily.

The protein resides in the cytoplasm. The catalysed reaction is 2-(N(omega)-L-arginino)succinate = fumarate + L-arginine. It participates in amino-acid biosynthesis; L-arginine biosynthesis; L-arginine from L-ornithine and carbamoyl phosphate: step 3/3. The chain is Argininosuccinate lyase from Geobacter sulfurreducens (strain ATCC 51573 / DSM 12127 / PCA).